Consider the following 481-residue polypeptide: N-succinylglutamate 5-semialdehyde dehydrogenase (481 aa).

206–211 contacts NAD(+); that stretch reads GSARTG. Active-site residues include Glu-229 and Cys-263.

Belongs to the aldehyde dehydrogenase family. AstD subfamily.

It carries out the reaction N-succinyl-L-glutamate 5-semialdehyde + NAD(+) + H2O = N-succinyl-L-glutamate + NADH + 2 H(+). The protein operates within amino-acid degradation; L-arginine degradation via AST pathway; L-glutamate and succinate from L-arginine: step 4/5. Catalyzes the NAD-dependent reduction of succinylglutamate semialdehyde into succinylglutamate. The protein is N-succinylglutamate 5-semialdehyde dehydrogenase of Sphingopyxis alaskensis (strain DSM 13593 / LMG 18877 / RB2256) (Sphingomonas alaskensis).